We begin with the raw amino-acid sequence, 157 residues long: NAD(P)H-quinone oxidoreductase subunit N (157 aa).

The protein belongs to the complex I NdhN subunit family. As to quaternary structure, NDH-1 can be composed of about 15 different subunits; different subcomplexes with different compositions have been identified which probably have different functions.

Its subcellular location is the cellular thylakoid membrane. The catalysed reaction is a plastoquinone + NADH + (n+1) H(+)(in) = a plastoquinol + NAD(+) + n H(+)(out). It carries out the reaction a plastoquinone + NADPH + (n+1) H(+)(in) = a plastoquinol + NADP(+) + n H(+)(out). Functionally, NDH-1 shuttles electrons from an unknown electron donor, via FMN and iron-sulfur (Fe-S) centers, to quinones in the respiratory and/or the photosynthetic chain. The immediate electron acceptor for the enzyme in this species is believed to be plastoquinone. Couples the redox reaction to proton translocation, and thus conserves the redox energy in a proton gradient. Cyanobacterial NDH-1 also plays a role in inorganic carbon-concentration. This is NAD(P)H-quinone oxidoreductase subunit N from Synechococcus sp. (strain CC9902).